A 627-amino-acid polypeptide reads, in one-letter code: MSVISIVPLASKSCLYKSLMSSTHELKALCRPIATLGMCRRGKSVMASMSTSLTTAVSDDGVQRRIGHHHSNLWDDNFIQSLSSPYGASSYAESAKKLIGEVKEIFNSLSMAAGGLMSPVDDLLQHLSMVDNVERLGIDRHFQTEIKVSLDYVYSYWSEKGIGSGRDIVCTDLNTTALGFRILRLHGYTVFPDVFEHFKDQMGRIACSANHTERQISSILNLFRASLIAFPGEKVMEEAEIFSATYLKEALQTIPVSSLSQEIQYVLQYRWHSNLPRLEARTYIDILQENTKNQMLDVNTKKVLELAKLEFNIFHSLQQNELKSVSRWWKESGFPDLNFIRHRHVEFYTLVSGIDMEPKHSTFRLSFVKMCHLITVLDDMYDTFGTIDELRLFTAAVKRWDPSTTQCLPEYMKGVYTVLYETVNEMAQEAQKSQGRDTLNYVRQALEAYIGAYHKEAEWISSGYLPTFDEYFENGKVSSGHRIATLQPIFMLDIPFPHHVLQEIDFPSNFNDFACSILRLRCDTRCYQADRARGEEASCISCYMKDHPGSTQEDALNHINNMIEETIKKLNWELMKPDNNVPISSKKPAFDISRGLHHFYNYRDGYTVSSNETKNLVIKTVLEPVPM.

Residues 1 to 36 constitute a chloroplast transit peptide; sequence MSVISIVPLASKSCLYKSLMSSTHELKALCRPIATL. Residues Asp378, Asp382, and Asp530 each coordinate Mg(2+). Positions 378–382 match the DDXXD motif motif; sequence DDMYD.

The protein belongs to the terpene synthase family. Tpsd subfamily. Mg(2+) serves as cofactor. Mn(2+) is required as a cofactor.

It localises to the plastid. The protein resides in the chloroplast. The catalysed reaction is (2E)-geranyl diphosphate = (+)-car-3-ene + diphosphate. It functions in the pathway terpene metabolism; oleoresin biosynthesis. Terpene synthase (TPS) involved in defensive oleoresin formation in conifers in response to insect attack or other injury. The polypeptide is Carene synthase 3, chloroplastic (TPS-3car3) (Picea sitchensis (Sitka spruce)).